The following is a 39-amino-acid chain: Bacteriocin SRCAM 602 (39 aa).

This sequence belongs to the bacteriocin class IIA/YGNGV family.

Its subcellular location is the secreted. In terms of biological role, bacteriocin with antibacterial activity against C.jejuni. In Paenibacillus polymyxa (Bacillus polymyxa), this protein is Bacteriocin SRCAM 602.